The following is an 80-amino-acid chain: Acyl carrier protein (80 aa).

One can recognise a Carrier domain in the interval 4–79 (DEIFSKVRSI…DVVNFIKKRK (76 aa)). S39 bears the O-(pantetheine 4'-phosphoryl)serine mark.

The protein belongs to the acyl carrier protein (ACP) family. Post-translationally, 4'-phosphopantetheine is transferred from CoA to a specific serine of apo-ACP by AcpS. This modification is essential for activity because fatty acids are bound in thioester linkage to the sulfhydryl of the prosthetic group.

The protein resides in the cytoplasm. The protein operates within lipid metabolism; fatty acid biosynthesis. Functionally, carrier of the growing fatty acid chain in fatty acid biosynthesis. The protein is Acyl carrier protein of Borreliella burgdorferi (strain ATCC 35210 / DSM 4680 / CIP 102532 / B31) (Borrelia burgdorferi).